A 142-amino-acid chain; its full sequence is Protein lin-32 (142 aa).

Residues 30-48 (PLQSPNFSLDSPNYPDSLS) are compositionally biased toward polar residues. Residues 30 to 66 (PLQSPNFSLDSPNYPDSLSNGGGKDDKKKCRRYKTPS) are disordered. Residues 72–124 (MRRSAANERERRRMNTLNVAYDELREVLPEIDSGKKLSKFETLQMAQKYIECL) enclose the bHLH domain.

Forms a heterodimer with hlh-2. In terms of tissue distribution, expressed in PVD motor neurons.

Its subcellular location is the nucleus. In terms of biological role, probable transcription factor which binds the E box motif 5'-CA[TC][AG]TG-3'. Essential for the specification of the neuroblast cell fate in the development of peripheral sense organs. Its role in the generation of sensory neurons may be through positively regulating the expression of the zinc finger protein ztf-11 during postdeirid neurogenesis. Required for specification of cell fate, acting in concert with lin-32, in the development of the male-specific genital sensilla (simple sense organs) known as rays. Involved in regulating glial specification, perhaps by suppressing a glial fate in different lineages during early embryogenesis. This chain is Protein lin-32, found in Caenorhabditis elegans.